A 146-amino-acid polypeptide reads, in one-letter code: MHLLQLLFRASPATLLLVLCLQLGANKAQDNTRKIIIKDFDIPKSVRPNDEVTAVLAVQTELKECMVIKTYLISSVPLEGAFNYKYTACLCDENPKTFYWDFYTNRTVQIAAVVDVIRELGICPDDAAVIPIKNNRFYTTETLEVE.

A signal peptide spans 1 to 28; sequence MHLLQLLFRASPATLLLVLCLQLGANKA. A Pyrrolidone carboxylic acid modification is found at Q29. 2 disulfide bridges follow: C65/C91 and C89/C123. Residue N105 is glycosylated (N-linked (GlcNAc...) asparagine).

This sequence belongs to the PIP family. In terms of assembly, monomer. Interacts with AZGP1.

It localises to the secreted. This Pongo pygmaeus (Bornean orangutan) protein is Prolactin-inducible protein homolog (PIP).